The sequence spans 178 residues: Large ribosomal subunit protein uL6 (178 aa).

It belongs to the universal ribosomal protein uL6 family. As to quaternary structure, part of the 50S ribosomal subunit.

Its function is as follows. This protein binds to the 23S rRNA, and is important in its secondary structure. It is located near the subunit interface in the base of the L7/L12 stalk, and near the tRNA binding site of the peptidyltransferase center. In Geobacillus kaustophilus (strain HTA426), this protein is Large ribosomal subunit protein uL6.